We begin with the raw amino-acid sequence, 260 residues long: Dolichol-phosphate mannosyltransferase subunit 1 (260 aa).

The residue at position 2 (A2) is an N-acetylalanine. Phosphoserine is present on residues S3 and S9. GDP-alpha-D-mannose is bound by residues P32, Y34, E36, I63, D65, D118, A119, D120, R147, R234, and K240. D120 is a Mg(2+) binding site. Residue D120 coordinates Mn(2+).

Belongs to the glycosyltransferase 2 family. As to quaternary structure, component of the dolichol-phosphate mannose (DPM) synthase complex composed of DPM1, DPM2 and DPM3; within the complex, directly interacts with DPM3. This interaction stabilizes DPM1. It depends on Mg(2+) as a cofactor. The cofactor is Mn(2+). Ca(2+) is required as a cofactor.

The protein localises to the endoplasmic reticulum. The catalysed reaction is a di-trans,poly-cis-dolichyl phosphate + GDP-alpha-D-mannose = a di-trans,poly-cis-dolichyl beta-D-mannosyl phosphate + GDP. It functions in the pathway protein modification; protein glycosylation. In terms of biological role, transfers mannose from GDP-mannose to dolichol monophosphate to form dolichol phosphate mannose (Dol-P-Man) which is the mannosyl donor in pathways leading to N-glycosylation, glycosyl phosphatidylinositol membrane anchoring, and O-mannosylation of proteins; catalytic subunit of the dolichol-phosphate mannose (DPM) synthase complex. This chain is Dolichol-phosphate mannosyltransferase subunit 1 (DPM1), found in Homo sapiens (Human).